The primary structure comprises 221 residues: UPF0758 protein Ent638_0101 (221 aa).

The MPN domain occupies 99-221; that stretch reads PLLSPEMTKD…YVSFAEQGWI (123 aa). Positions 170, 172, and 183 each coordinate Zn(2+). A JAMM motif motif is present at residues 170–183; that stretch reads HNHPSGCAEPSKAD.

The protein belongs to the UPF0758 family. YicR subfamily.

This chain is UPF0758 protein Ent638_0101, found in Enterobacter sp. (strain 638).